Here is a 741-residue protein sequence, read N- to C-terminus: Translation initiation factor IF-2 (741 aa).

2 stretches are compositionally biased toward basic and acidic residues: residues 48-74 (HQYR…DKPK) and 107-123 (KGKE…EKKA). The tract at residues 48–158 (HQYRPKAEKK…PQPAKKEKEL (111 aa)) is disordered. The segment covering 127 to 139 (AKKKGKGPAKGKK) has biased composition (basic residues). Residues 140–151 (QAAPAAKQVPQP) show a composition bias toward low complexity. In terms of domain architecture, tr-type G spans 242–411 (ERPPVVTIMG…LLVSEMEELK (170 aa)). Residues 251–258 (GHVDHGKT) form a G1 region. 251 to 258 (GHVDHGKT) is a GTP binding site. The G2 stretch occupies residues 276 to 280 (GITQH). Residues 297-300 (DTPG) form a G3 region. Residues 297-301 (DTPGH) and 351-354 (NKMD) contribute to the GTP site. The segment at 351–354 (NKMD) is G4. Residues 387–389 (SAK) are G5.

The protein belongs to the TRAFAC class translation factor GTPase superfamily. Classic translation factor GTPase family. IF-2 subfamily.

Its subcellular location is the cytoplasm. Its function is as follows. One of the essential components for the initiation of protein synthesis. Protects formylmethionyl-tRNA from spontaneous hydrolysis and promotes its binding to the 30S ribosomal subunits. Also involved in the hydrolysis of GTP during the formation of the 70S ribosomal complex. The protein is Translation initiation factor IF-2 (infB) of Geobacillus stearothermophilus (Bacillus stearothermophilus).